The following is a 145-amino-acid chain: 3-dehydroquinate dehydratase (145 aa).

Tyr23 (proton acceptor) is an active-site residue. 3 residues coordinate substrate: Asn73, His79, and Asp86. His99 (proton donor) is an active-site residue. Substrate-binding positions include Leu100–Ser101 and Arg110.

The protein belongs to the type-II 3-dehydroquinase family. As to quaternary structure, homododecamer.

The catalysed reaction is 3-dehydroquinate = 3-dehydroshikimate + H2O. It functions in the pathway metabolic intermediate biosynthesis; chorismate biosynthesis; chorismate from D-erythrose 4-phosphate and phosphoenolpyruvate: step 3/7. Functionally, catalyzes a trans-dehydration via an enolate intermediate. The polypeptide is 3-dehydroquinate dehydratase (Desulfitobacterium hafniense (strain DSM 10664 / DCB-2)).